The sequence spans 115 residues: Non-specific lipid-transfer protein Cor a 8.0101 (115 aa).

Positions 1-23 (MGSLKLVCAVLLCMMVAAPVARA) are cleaved as a signal peptide. 4 disulfides stabilise this stretch: Cys-27-Cys-74, Cys-37-Cys-51, Cys-52-Cys-97, and Cys-72-Cys-111.

It belongs to the plant LTP family. Monomer. As to expression, expressed in seed (at protein level). Expressed in seed.

In terms of biological role, plant non-specific lipid-transfer proteins transfer phospholipids as well as galactolipids across membranes. May play a role in wax or cutin deposition in the cell walls of expanding epidermal cells and certain secretory tissues. This is Non-specific lipid-transfer protein Cor a 8.0101 from Corylus avellana (European hazel).